A 219-amino-acid chain; its full sequence is Ras-like protein 1 (219 aa).

A GTP-binding site is contributed by 15 to 22 (GDGGVGKS). Residues 37–45 (YDPTIEDSY) carry the Effector region motif. GTP-binding positions include 62–66 (DTAGQ) and 121–124 (NKCD). The residue at position 216 (Cys-216) is a Cysteine methyl ester. Cys-216 carries the S-farnesyl cysteine lipid modification. The propeptide at 217–219 (VIC) is removed in mature form.

It belongs to the small GTPase superfamily. Ras family. In terms of assembly, scd1, scd2, cdc42, and ras1, in its GTP-bound state, act cooperatively to form a protein complex. In terms of processing, palmitoylated by the erf2-erf4 complex.

Its subcellular location is the cell membrane. It carries out the reaction GTP + H2O = GDP + phosphate + H(+). Its activity is regulated as follows. Alternates between an inactive form bound to GDP and an active form bound to GTP. Activated by a guanine nucleotide-exchange factor (GEF) and inactivated by a GTPase-activating protein (GAP). In terms of biological role, participates in the process of sexual differentiation and the determination of cell shape. Essential for mating and for recognition of the mating pheromone, but not for vegetative growth. Does not regulate the intracellular cAMP level. Regulates two downstream pathways, namely the byr2/byr1/spk1 mitogen-activated protein kinase cascade and the cdc42 small G protein pathway. The former is relevant to mating and sporulation, whereas the latter is relevant to mating, cell growth and cell morphology. This is Ras-like protein 1 (ras1) from Schizosaccharomyces pombe (strain 972 / ATCC 24843) (Fission yeast).